The sequence spans 414 residues: Serine--tRNA ligase (414 aa).

230–232 (TAE) serves as a coordination point for L-serine. Residue 261-263 (RKE) coordinates ATP. L-serine is bound at residue Glu-284. 348-351 (EISS) contributes to the ATP binding site. Residue Ser-382 participates in L-serine binding.

Belongs to the class-II aminoacyl-tRNA synthetase family. Type-1 seryl-tRNA synthetase subfamily. As to quaternary structure, homodimer. The tRNA molecule binds across the dimer.

It is found in the cytoplasm. The enzyme catalyses tRNA(Ser) + L-serine + ATP = L-seryl-tRNA(Ser) + AMP + diphosphate + H(+). It catalyses the reaction tRNA(Sec) + L-serine + ATP = L-seryl-tRNA(Sec) + AMP + diphosphate + H(+). The protein operates within aminoacyl-tRNA biosynthesis; selenocysteinyl-tRNA(Sec) biosynthesis; L-seryl-tRNA(Sec) from L-serine and tRNA(Sec): step 1/1. Catalyzes the attachment of serine to tRNA(Ser). Is also able to aminoacylate tRNA(Sec) with serine, to form the misacylated tRNA L-seryl-tRNA(Sec), which will be further converted into selenocysteinyl-tRNA(Sec). This Sulfurovum sp. (strain NBC37-1) protein is Serine--tRNA ligase.